The sequence spans 421 residues: Tyrosine-protein phosphatase non-receptor type 20 (421 aa).

A disordered region spans residues Met1 to His58. Low complexity predominate over residues Leu27 to Thr41. Residues Lys48 to His58 are compositionally biased toward polar residues. Phosphoserine is present on Ser76. The disordered stretch occupies residues Arg93–Ser116. The segment covering Pro104–Ser116 has biased composition (polar residues). Ser122 carries the post-translational modification Phosphoserine. Residues Ile160–Val413 form the Tyrosine-protein phosphatase domain. Substrate-binding positions include Asp324, Cys354 to Arg360, and Gln398. Cys354 (phosphocysteine intermediate) is an active-site residue.

This sequence belongs to the protein-tyrosine phosphatase family. Non-receptor class subfamily.

Its subcellular location is the nucleus. The protein resides in the cytoplasm. The protein localises to the cytoskeleton. It localises to the microtubule organizing center. It is found in the centrosome. The catalysed reaction is O-phospho-L-tyrosyl-[protein] + H2O = L-tyrosyl-[protein] + phosphate. Functionally, tyrosine-protein phosphatase targeted to sites of actin polymerization in response of varied extracellular stimuli. Has tyrosine phosphatase activity towards various tyrosyl phosphorylated substrates. The polypeptide is Tyrosine-protein phosphatase non-receptor type 20 (Ptpn20) (Rattus norvegicus (Rat)).